Consider the following 240-residue polypeptide: Eukaryotic translation initiation factor 3 subunit J (240 aa).

Residues 1-66 are disordered; the sequence is MADDWESAAD…VPVKTKPSKA (66 aa). Over residues 27-45 the composition is skewed to acidic residues; the sequence is GEDDDDDVKESWEDEEEKK.

It belongs to the eIF-3 subunit J family. Component of the eukaryotic translation initiation factor 3 (eIF-3) complex. The eIF-3 complex interacts with pix.

The protein localises to the cytoplasm. Component of the eukaryotic translation initiation factor 3 (eIF-3) complex, which is involved in protein synthesis of a specialized repertoire of mRNAs and, together with other initiation factors, stimulates binding of mRNA and methionyl-tRNAi to the 40S ribosome. The eIF-3 complex specifically targets and initiates translation of a subset of mRNAs involved in cell proliferation. This Drosophila persimilis (Fruit fly) protein is Eukaryotic translation initiation factor 3 subunit J.